Consider the following 149-residue polypeptide: MRVILQKDVINLGDAGDLKEVADGYARNFLFPKRLAVRANEGNTKAALHQKKLGELKREKRKKAMEDVGGNLNGKEYEILVKTGGGEKLFGAVTPIDVASILKKNGFELDKRKIEIAEPIRNLGSYKIKIRLAEGIQPTITLHVKKEEE.

Belongs to the bacterial ribosomal protein bL9 family.

Its function is as follows. Binds to the 23S rRNA. In Leptospira interrogans serogroup Icterohaemorrhagiae serovar copenhageni (strain Fiocruz L1-130), this protein is Large ribosomal subunit protein bL9.